The following is a 244-amino-acid chain: Orotidine 5'-phosphate decarboxylase (244 aa).

Substrate-binding positions include aspartate 10, lysine 32, 59–68, threonine 122, arginine 184, glutamine 193, glycine 213, and arginine 214; that span reads DLKLHDIPNT. The active-site Proton donor is lysine 61.

The protein belongs to the OMP decarboxylase family. Type 1 subfamily. As to quaternary structure, homodimer.

It carries out the reaction orotidine 5'-phosphate + H(+) = UMP + CO2. Its pathway is pyrimidine metabolism; UMP biosynthesis via de novo pathway; UMP from orotate: step 2/2. In terms of biological role, catalyzes the decarboxylation of orotidine 5'-monophosphate (OMP) to uridine 5'-monophosphate (UMP). The chain is Orotidine 5'-phosphate decarboxylase from Geobacillus kaustophilus (strain HTA426).